The following is a 317-amino-acid chain: DNA-directed RNA polymerase subunit alpha (317 aa).

The tract at residues 1 to 234 (MKQFVRPEFI…AHLEFFIDLN (234 aa)) is alpha N-terminal domain (alpha-NTD). The tract at residues 249-317 (DDKELDRTVE…ASLGLAFRQS (69 aa)) is alpha C-terminal domain (alpha-CTD).

The protein belongs to the RNA polymerase alpha chain family. Homodimer. The RNAP catalytic core consists of 2 alpha, 1 beta, 1 beta' and 1 omega subunit. When a sigma factor is associated with the core the holoenzyme is formed, which can initiate transcription.

The catalysed reaction is RNA(n) + a ribonucleoside 5'-triphosphate = RNA(n+1) + diphosphate. Its function is as follows. DNA-dependent RNA polymerase catalyzes the transcription of DNA into RNA using the four ribonucleoside triphosphates as substrates. This chain is DNA-directed RNA polymerase subunit alpha, found in Mycoplasma capricolum subsp. capricolum (strain California kid / ATCC 27343 / NCTC 10154).